A 403-amino-acid polypeptide reads, in one-letter code: RNA-binding motif, single-stranded-interacting protein 1 (403 aa).

The disordered stretch occupies residues 30 to 56; it reads PAHPMAPPSPSTTSSNNNSSSSSNSGW. Residues 40–54 show a composition bias toward low complexity; sequence STTSSNNNSSSSSNS. 2 RRM domains span residues 62-135 and 141-226; these read TNLY…MAKQ and TNLY…FADG. Residue Thr-208 is modified to Phosphothreonine.

Its subcellular location is the nucleus. Its function is as follows. Single-stranded DNA binding protein that interacts with the region upstream of the MYC gene. Binds specifically to the DNA sequence motif 5'-[AT]CT[AT][AT]T-3'. Probably has a role in DNA replication. In Rattus norvegicus (Rat), this protein is RNA-binding motif, single-stranded-interacting protein 1.